The sequence spans 107 residues: Thioredoxin (107 aa).

One can recognise a Thioredoxin domain in the interval 2-107 (SATPQVSDAS…TLASTLEKYL (106 aa)). C32 and C35 are oxidised to a cystine.

It belongs to the thioredoxin family.

Functionally, component of the thioredoxin-thioredoxin reductase system. Participates in various redox reactions through the reversible oxidation of its active center dithiol to a disulfide and catalyzes dithiol-disulfide exchange reactions. This Synechocystis sp. (strain ATCC 27184 / PCC 6803 / Kazusa) protein is Thioredoxin (trxA).